Reading from the N-terminus, the 162-residue chain is Terminase, small subunit (162 aa).

Residues 7 to 27 are helix-turn-helix (HTH); sequence NRFWEARSSHGRNPKFESPEA. A disordered region spans residues 132–162; that stretch reads QVEDVTPDKGDRDKRRSRIKELFNRGTGRDS. Over residues 137–162 the composition is skewed to basic and acidic residues; sequence TPDKGDRDKRRSRIKELFNRGTGRDS. An interaction with the terminase large subunit gp2 region spans residues 140–162; sequence KGDRDKRRSRIKELFNRGTGRDS. The DNA-binding element occupies 143–152; that stretch reads RDKRRSRIKE.

It belongs to the P22likvirus small terminase family. Homononamer; forms a ring-like structure through which genomic DNA is translocated into the capsid. Interacts with the terminase small subunit; the active complex is composed of dimer of terminase large subunits and a nonamer ring of terminase small subunits.

Its function is as follows. The terminase small subunit binds to the packaging initiation site and regulates the ATPase activity of the terminase large subunit. The terminase lies at a unique vertex of the procapsid and is composed of two subunits, a small terminase subunit involved in viral DNA recognition (packaging 'pac' sequence), and a large terminase subunit possessing endonucleolytic and ATPase activities. Both terminase subunits heterooligomerize and are docked on the portal protein to form the packaging machine. The terminase large subunit exhibits endonuclease activity and cleaves the viral genome concatemer once the capsid is full (headful packaging). Once the capsid is packaged with the DNA, the terminase complex is substituted by neck proteins. This chain is Terminase, small subunit (3), found in Salmonella typhimurium (Bacteriophage P22).